The sequence spans 402 residues: Peptidyl-prolyl cis-trans isomerase FKBP8 (402 aa).

A compositionally biased stretch (acidic residues) spans 28-39 (DGVDDAEEEDDL). Positions 28–54 (DGVDDAEEEDDLSGLPPLEDMGQPTVE) are disordered. A PPIase FKBP-type domain is found at 110-194 (GQVVTVHLQM…CLEVTLKTAE (85 aa)). Residues 211–244 (ANRKRECGNAHYQRADFVLAANSYDLAIKAITSN) form a TPR 1 repeat. Residues Lys239, Lys261, Lys263, and Lys274 each participate in a glycyl lysine isopeptide (Lys-Gly) (interchain with G-Cter in ubiquitin) cross-link. TPR repeat units follow at residues 262-295 (VKCLNNLAASQLKLDHYRAALRSCSQVLEHQPDN) and 296-329 (IKALFRKGKVLAQQGEYSEAIPILRAALKLEPSN). At Ser286 the chain carries Phosphoserine. Residues Lys297, Lys304, Lys324, Lys330, Lys338, Lys341, and Lys342 each participate in a glycyl lysine isopeptide (Lys-Gly) (interchain with G-Cter in ubiquitin) cross-link. The chain crosses the membrane as a helical span at residues 380–400 (WLFGATAVALGGVALSVVIAA).

Homomultimers or heteromultimers (Potential). Forms heterodimer with calmodulin. When activated by calmodulin and calcium, interacts with the BH4 domain of BCL2 and weakly with BCLX isoform Bcl-X(L). Does not bind and inhibit calcineurin. Interacts with ZFYVE27; may negatively regulate ZFYVE27 phosphorylation. Ca(2+) is required as a cofactor. Post-translationally, ubiquitinated by PRKN during mitophagy, leading to its degradation and enhancement of mitophagy. Deubiquitinated by USP30. Detected throughout the embryonic body, in caudal neural tube, limbs and head. Detected in adult retina, brain, heart, kidney, liver, pancreas, lung, testis and urinary bladder (at protein level). Detected in adult brain, kidney, liver, testis and trigeminal nerve, and in embryo. Detected at lower levels in lung, spleen, heart and ovary. Widely expressed in forebrain. Detected in the Purkinje cell layer in the cerebellum and in hippocampus neurons.

The protein resides in the mitochondrion membrane. The catalysed reaction is [protein]-peptidylproline (omega=180) = [protein]-peptidylproline (omega=0). Its function is as follows. Constitutively inactive PPiase, which becomes active when bound to calmodulin and calcium. Seems to act as a chaperone for BCL2, targets it to the mitochondria and modulates its phosphorylation state. The BCL2/FKBP8/calmodulin/calcium complex probably interferes with the binding of BCL2 to its targets. The active form of FKBP8 may therefore play a role in the regulation of apoptosis. Required for normal embryonic development. The protein is Peptidyl-prolyl cis-trans isomerase FKBP8 (Fkbp8) of Mus musculus (Mouse).